The primary structure comprises 873 residues: Cilia- and flagella-associated protein 58 (873 aa).

2 coiled-coil regions span residues 106–609 (VDSA…VISE) and 642–832 (ETQY…QKRK). Residues 202–221 (QEIQHRQNEASRESRKKEKL) form a disordered region. The span at 204–221 (IQHRQNEASRESRKKEKL) shows a compositional bias: basic and acidic residues.

Belongs to the CFAP58 family. As to quaternary structure, interacts with ODFP2. Predominantly expressed in the testis. Also found at lower levels in ciliated cells and tissues such as neural progenitor cells and oviducts.

The protein localises to the cell projection. Its subcellular location is the cilium. The protein resides in the flagellum. It is found in the cytoplasm. It localises to the cytoskeleton. The protein localises to the microtubule organizing center. Its subcellular location is the centrosome. Functionally, has an essential role in the assembly and organization of the sperm flagellar axoneme. Required for the elongation of the primary cilium and sperm flagellar midpiece via modulation of the Notch signaling pathway. This Mus musculus (Mouse) protein is Cilia- and flagella-associated protein 58.